A 96-amino-acid chain; its full sequence is UPF0251 protein Shal_3723 (96 aa).

It belongs to the UPF0251 family.

The polypeptide is UPF0251 protein Shal_3723 (Shewanella halifaxensis (strain HAW-EB4)).